A 234-amino-acid chain; its full sequence is Orotidine 5'-phosphate decarboxylase (234 aa).

Substrate is bound by residues aspartate 11, lysine 33, 60-69, threonine 120, arginine 181, glutamine 190, glycine 210, and arginine 211; that span reads DLKFHDIPNT. The active-site Proton donor is lysine 62.

Belongs to the OMP decarboxylase family. Type 1 subfamily. In terms of assembly, homodimer.

The catalysed reaction is orotidine 5'-phosphate + H(+) = UMP + CO2. The protein operates within pyrimidine metabolism; UMP biosynthesis via de novo pathway; UMP from orotate: step 2/2. Its function is as follows. Catalyzes the decarboxylation of orotidine 5'-monophosphate (OMP) to uridine 5'-monophosphate (UMP). The protein is Orotidine 5'-phosphate decarboxylase of Shewanella sediminis (strain HAW-EB3).